Reading from the N-terminus, the 402-residue chain is Putative nickel insertion protein (402 aa).

Belongs to the LarC family.

The protein is Putative nickel insertion protein of Synechococcus elongatus (strain ATCC 33912 / PCC 7942 / FACHB-805) (Anacystis nidulans R2).